A 303-amino-acid chain; its full sequence is Ribosomal RNA small subunit methyltransferase H (303 aa).

Residues 33-35, Asp-52, Phe-78, Asp-99, and Gln-106 each bind S-adenosyl-L-methionine; that span reads GGH.

It belongs to the methyltransferase superfamily. RsmH family.

It is found in the cytoplasm. The catalysed reaction is cytidine(1402) in 16S rRNA + S-adenosyl-L-methionine = N(4)-methylcytidine(1402) in 16S rRNA + S-adenosyl-L-homocysteine + H(+). In terms of biological role, specifically methylates the N4 position of cytidine in position 1402 (C1402) of 16S rRNA. In Phytoplasma australiense, this protein is Ribosomal RNA small subunit methyltransferase H.